The sequence spans 131 residues: Holo-[acyl-carrier-protein] synthase (131 aa).

Residues aspartate 8 and glutamate 59 each contribute to the Mg(2+) site.

Belongs to the P-Pant transferase superfamily. AcpS family. The cofactor is Mg(2+).

It localises to the cytoplasm. It catalyses the reaction apo-[ACP] + CoA = holo-[ACP] + adenosine 3',5'-bisphosphate + H(+). Its function is as follows. Transfers the 4'-phosphopantetheine moiety from coenzyme A to a Ser of acyl-carrier-protein. The sequence is that of Holo-[acyl-carrier-protein] synthase from Rickettsia rickettsii (strain Iowa).